Here is a 149-residue protein sequence, read N- to C-terminus: Large ribosomal subunit protein uL13 (149 aa).

The protein belongs to the universal ribosomal protein uL13 family. Part of the 50S ribosomal subunit.

Functionally, this protein is one of the early assembly proteins of the 50S ribosomal subunit, although it is not seen to bind rRNA by itself. It is important during the early stages of 50S assembly. The sequence is that of Large ribosomal subunit protein uL13 from Borrelia duttonii (strain Ly).